A 205-amino-acid polypeptide reads, in one-letter code: Recombination protein RecR (205 aa).

The C4-type zinc finger occupies 59-74 (CSVCFHLSAEPVCEVC). A Toprim domain is found at 82 to 181 (GTLCVVADSR…KVTRIAFGLP (100 aa)).

It belongs to the RecR family.

Its function is as follows. May play a role in DNA repair. It seems to be involved in an RecBC-independent recombinational process of DNA repair. It may act with RecF and RecO. The chain is Recombination protein RecR from Cyanothece sp. (strain PCC 7425 / ATCC 29141).